A 155-amino-acid polypeptide reads, in one-letter code: uncharacterized protein (155 aa).

The protein belongs to the IIV-6 145L family.

This is an uncharacterized protein from Acheta domesticus (House cricket).